A 431-amino-acid chain; its full sequence is tRNA (adenine(37)-N6)-methyltransferase (431 aa).

The 139-residue stretch at 30–168 (TEPIGYLESC…YIADYDSPQN (139 aa)) folds into the TsaA-like domain. S-adenosyl-L-methionine contacts are provided by residues 47–49 (PRQ), 90–91 (HK), Arg-117, Leu-127, and 148–151 (IHGT). Disordered stretches follow at residues 167-189 (QNLEPQTKHHKLRAAGPSDATAN) and 201-243 (KAQP…DRER). Over residues 207–243 (STKEKPKCREHRTSDENSQKFRDTSEIQHTLPEDRER) the composition is skewed to basic and acidic residues.

This sequence belongs to the tRNA methyltransferase O family.

It carries out the reaction N(6)-L-threonylcarbamoyladenosine(37) in tRNA + S-adenosyl-L-methionine = N(6)-methyl,N(6)-L-threonylcarbamoyladenosine(37) in tRNA + S-adenosyl-L-homocysteine + H(+). S-adenosyl-L-methionine-dependent methyltransferase responsible for the addition of the methyl group in the formation of N6-methyl-N6-threonylcarbamoyladenosine at position 37 (m(6)t(6)A37) of the tRNA anticodon loop of tRNA(Ser)(GCU). The methyl group of m(6)t(6)A37 may improve the efficiency of the tRNA decoding ability. May bind to tRNA. The sequence is that of tRNA (adenine(37)-N6)-methyltransferase from Rattus norvegicus (Rat).